The primary structure comprises 393 residues: NAD(P)H-quinone oxidoreductase subunit H, chloroplastic (393 aa).

This sequence belongs to the complex I 49 kDa subunit family. In terms of assembly, NDH is composed of at least 16 different subunits, 5 of which are encoded in the nucleus.

The protein resides in the plastid. It is found in the chloroplast thylakoid membrane. The enzyme catalyses a plastoquinone + NADH + (n+1) H(+)(in) = a plastoquinol + NAD(+) + n H(+)(out). It carries out the reaction a plastoquinone + NADPH + (n+1) H(+)(in) = a plastoquinol + NADP(+) + n H(+)(out). Its function is as follows. NDH shuttles electrons from NAD(P)H:plastoquinone, via FMN and iron-sulfur (Fe-S) centers, to quinones in the photosynthetic chain and possibly in a chloroplast respiratory chain. The immediate electron acceptor for the enzyme in this species is believed to be plastoquinone. Couples the redox reaction to proton translocation, and thus conserves the redox energy in a proton gradient. The polypeptide is NAD(P)H-quinone oxidoreductase subunit H, chloroplastic (Fagopyrum esculentum subsp. ancestrale (Wild buckwheat)).